The primary structure comprises 188 residues: Peptidyl-tRNA hydrolase (188 aa).

Y17 lines the tRNA pocket. H22 acts as the Proton acceptor in catalysis. Y65, N67, and N113 together coordinate tRNA.

The protein belongs to the PTH family. Monomer.

It is found in the cytoplasm. The catalysed reaction is an N-acyl-L-alpha-aminoacyl-tRNA + H2O = an N-acyl-L-amino acid + a tRNA + H(+). In terms of biological role, hydrolyzes ribosome-free peptidyl-tRNAs (with 1 or more amino acids incorporated), which drop off the ribosome during protein synthesis, or as a result of ribosome stalling. Functionally, catalyzes the release of premature peptidyl moieties from peptidyl-tRNA molecules trapped in stalled 50S ribosomal subunits, and thus maintains levels of free tRNAs and 50S ribosomes. This Mycoplasma pneumoniae (strain ATCC 29342 / M129 / Subtype 1) (Mycoplasmoides pneumoniae) protein is Peptidyl-tRNA hydrolase.